The primary structure comprises 168 residues: Protein DESIGUAL 2 (168 aa).

An N-terminal signal peptide occupies residues 1–20 (MARNVGFFICILILAMDVSA). Helical transmembrane passes span 56–76 (LAACILLVLAHVTANFLGGCL), 94–114 (AVASLIFTWIILAIAFSMLIV), and 133–153 (VLSIGGILCFVHGLFAVAYYI).

This sequence belongs to the DESIGUAL family. As to expression, mainly expressed in roots, inflorescences and developing leaves, and, at low levels, in mature leaves.

The protein localises to the endoplasmic reticulum membrane. Functionally, involved, partially redundantly with VCC/DEAL1 and DEAL3, to ensure bilateral symmetry development and early leaf margin patterning, probably via the regulation of auxin and CUC2 distribution. The protein is Protein DESIGUAL 2 of Arabidopsis thaliana (Mouse-ear cress).